Consider the following 988-residue polypeptide: Voltage-gated delayed rectifier potassium channel KCNH5 (988 aa).

Residues 1-217 lie on the Cytoplasmic side of the membrane; the sequence is MPGGKRGLVA…LHYCAFKTTW (217 aa). One can recognise a PAS domain in the interval 12–90; it reads QNTFLENIVR…VRQTFDNYES (79 aa). The 53-residue stretch at 91-143 folds into the PAC domain; the sequence is NCFEVLLYKKNRTPVWFYMQIAPIRNEHEKVVLFLCTFKDITLFKQPIEDDST. A helical transmembrane segment spans residues 218–238; sequence DWVILILTFYTAIMVPYNVSF. Residues 239–243 are Extracellular-facing; it reads KTKQN. The helical transmembrane segment at 244 to 264 threads the bilayer; it reads NIAWLVLDSVVDVIFLVDIVL. Topologically, residues 265–291 are cytoplasmic; it reads NFHTTFVGPGGEVISDPKLIRMNYLKT. The helical transmembrane segment at 292 to 312 threads the bilayer; the sequence is WFVIDLLSCLPYDIINAFENV. At 313–319 the chain is on the extracellular side; it reads DEGISSL. The chain crosses the membrane as a helical; Voltage-sensor span at residues 320-340; the sequence is FSSLKVVRLLRLGRVARKLDH. At 341 to 346 the chain is on the cytoplasmic side; sequence YLEYGA. A helical membrane pass occupies residues 347–367; that stretch reads AVLVLLVCVFGLVAHWLACIW. Over 368–419 the chain is Extracellular; the sequence is YSIGDYEVIDEVTNTIQIDSWLYQLALSIGTPYRYNTSAGIWEGGPSKDSLY. N-linked (GlcNAc...) asparagine glycosylation is present at N403. Residues 420 to 440 constitute an intramembrane region (pore-forming); that stretch reads VSSLYFTMTSLTTIGFGNIAP. Positions 432–437 match the Selectivity filter motif; sequence TIGFGN. Residues 441 to 446 lie on the Extracellular side of the membrane; that stretch reads TTDVEK. Residues 447–467 traverse the membrane as a helical segment; the sequence is MFSVAMMMVGSLLYATIFGNV. Residues 468 to 988 lie on the Cytoplasmic side of the membrane; it reads TTIFQQMYAN…PESDKDEIHF (521 aa). Position 550–667 (550–667) interacts with a nucleoside 3',5'-cyclic phosphate; the sequence is AFRLASDGCL…NSFSRNLTLT (118 aa). The interval 704-715 is calmodulin-binding; that stretch reads HPVRKLFQKFKQ. Positions 717 to 742 are disordered; the sequence is KELRNQGSTQGDPERNQLQVESRSLQ. The segment covering 721-742 has biased composition (polar residues); that stretch reads NQGSTQGDPERNQLQVESRSLQ. K785 participates in a covalent cross-link: Glycyl lysine isopeptide (Lys-Gly) (interchain with G-Cter in ubiquitin). The segment at 838-890 is disordered; the sequence is GLLSEDPKSSDSENSVTKNPLRKTDSCDSGITKSDLRLDKAGEARSPLEHSPI. The segment covering 871–885 has biased composition (basic and acidic residues); that stretch reads SDLRLDKAGEARSPL. At S883 the chain carries Phosphoserine. A CAD (involved in subunit assembly) region spans residues 909–948; that stretch reads TLQEVKHELKEDIQLLSCRMTALEKQVAEILKILSEKSVP. Positions 969–988 are disordered; sequence DIFSVSRPESPESDKDEIHF. Over residues 977–988 the composition is skewed to basic and acidic residues; sequence ESPESDKDEIHF.

It belongs to the potassium channel family. H (Eag) (TC 1.A.1.20) subfamily. Kv10.2/KCNH5 sub-subfamily. As to quaternary structure, homotetramer. The potassium channel is probably composed of a homo- or heterotetrameric complex of pore-forming alpha subunits that can associate with modulating beta subunits. Heteromultimer with KCNH1/EAG. Detected in brain, skeletal muscle, heart, placenta, lung and liver, and at low levels in kidney.

The protein resides in the membrane. The enzyme catalyses K(+)(in) = K(+)(out). In terms of biological role, pore-forming (alpha) subunit of a voltage-gated delayed rectifier potassium channel that mediates outward-rectifying potassium currents which, on depolarization, reaches a steady-state level and do not inactivate. The kinetic is characterized by a slow activation time course and a small voltage dependence of the activation time constants, therefore, starts to open at more negative voltages. The activation kinetics depend on the prepulse potential and external divalent cation concentration. The time course of activation is biphasic with a fast and a slowly activating current component. With negative prepulses, the current activation is delayed and slowed down several fold, whereas more positive prepulses speed up activation, therefore the activation rate depends on holding potential. The sequence is that of Voltage-gated delayed rectifier potassium channel KCNH5 from Homo sapiens (Human).